The following is a 561-amino-acid chain: Urocanate hydratase (561 aa).

Residues G52 to G53, Q130, G176 to G178, E196, R201, N242 to A243, Q263 to H267, Y273 to L274, and Y322 contribute to the NAD(+) site. C410 is an active-site residue. G492 contributes to the NAD(+) binding site.

The protein belongs to the urocanase family. NAD(+) is required as a cofactor.

Its subcellular location is the cytoplasm. The catalysed reaction is 4-imidazolone-5-propanoate = trans-urocanate + H2O. Its pathway is amino-acid degradation; L-histidine degradation into L-glutamate; N-formimidoyl-L-glutamate from L-histidine: step 2/3. Its function is as follows. Catalyzes the conversion of urocanate to 4-imidazolone-5-propionate. The chain is Urocanate hydratase from Salmonella gallinarum (strain 287/91 / NCTC 13346).